We begin with the raw amino-acid sequence, 907 residues long: Probable disease resistance protein At1g58390 (907 aa).

One can recognise an NB-ARC domain in the interval 144–456; that stretch reads QGDRQREMRQ…AEGISTAEDY (313 aa). 190 to 197 contacts ATP; sequence GMGGLGKT. LRR repeat units follow at residues 608–631 and 843–868; these read LIHL…LGNL and MPLL…RFIY.

The protein belongs to the disease resistance NB-LRR family.

Functionally, possible disease resistance protein. This chain is Probable disease resistance protein At1g58390, found in Arabidopsis thaliana (Mouse-ear cress).